The primary structure comprises 351 residues: Protein Wnt-4 (351 aa).

The first 22 residues, 1–22, serve as a signal peptide directing secretion; sequence MSPRSCLRSLRLLVFAVFSAAA. 11 disulfide bridges follow: C78-C89, C128-C136, C138-C155, C206-C220, C208-C215, C280-C311, C296-C306, C310-C350, C326-C341, C328-C338, and C333-C334. N88 carries an N-linked (GlcNAc...) asparagine glycan. S212 carries the O-palmitoleoyl serine; by PORCN lipid modification. N-linked (GlcNAc...) asparagine glycosylation is present at N297.

Belongs to the Wnt family. In terms of assembly, interacts with PORCN. Interacts with PKD1. Post-translationally, palmitoleoylation is required for efficient binding to frizzled receptors. Depalmitoleoylation leads to Wnt signaling pathway inhibition. In terms of tissue distribution, in adults in lung and brain.

It localises to the secreted. It is found in the extracellular space. Its subcellular location is the extracellular matrix. Its function is as follows. Ligand for members of the frizzled family of seven transmembrane receptors. Plays an important role in the embryonic development of the urogenital tract and the lung. Required for normal mesenchyme to epithelium transition during embryonic kidney development. Required for the formation of early epithelial renal vesicles during kidney development. Required for normal formation of the Mullerian duct in females, and normal levels of oocytes in the ovaries. Required for normal down-regulation of 3 beta-hydroxysteroid dehydrogenase in the ovary. Required for normal lung development and for normal patterning of trachael cartilage rings. This Mus musculus (Mouse) protein is Protein Wnt-4 (Wnt4).